Consider the following 128-residue polypeptide: Tachykinin-4 (128 aa).

The first 16 residues, 1 to 16 (MLPLLALLLLIGPSVC), serve as a signal peptide directing secretion. A propeptide spanning residues 17-54 (TTAGDREELAFGAEAESWVTVNLKGIPVPSIELKLQEL) is cleaved from the precursor. Met-66 bears the Methionine amide mark. The propeptide occupies 69 to 128 (RVGGYQLGRIVQDLLGTRGLSIEGTCRQAASQQRARPGAVTRESLQSREEDEAPLTTSNV). The tract at residues 96–128 (QAASQQRARPGAVTRESLQSREEDEAPLTTSNV) is disordered.

The protein belongs to the tachykinin family. As to expression, expressed in hematopoietic cells with highest levels in pre- and pro-B cells but not in later developmental stages. Also detected in uterus, skeletal muscle, brain, spleen, stomach, skin and lactating mammary gland and in cells of myeloid lineage including dendritic and microglial cells and macrophages. In uterus, highest expression is observed in non-pregnant diestrus mice and in day 5 pregnant mice. Compared with mice in diestrus, decreases 2.6-fold in uteri from non-pregnant mice in estrus and 10.2-fold in day 17 pregnant mice. Detected at sites of chronic inflammation such as granulomas.

The protein localises to the secreted. Tachykinins are active peptides which excite neurons, evoke behavioral responses, are potent vasodilators and secretagogues, and contract (directly or indirectly) many smooth muscles. Hemokinin induces plasma extravasation, mast cell degranulation, muscle contraction, salivary secretion and scratching behavior. Increases sperm motility. Induces potent analgesic effects and may play a role in pain modulation. Promotes survival of bone marrow B lineage cells and of cultured LPS-stimulated pre-B cells and may act as an autocrine factor required for B-cell survival and proliferation. Lowers systemic arterial pressure following intravenous injection. Induces interferon-gamma production and may play a role in the inflammatory response. Shows potent affinity and specificity for the NK-1 receptor. This chain is Tachykinin-4, found in Mus musculus (Mouse).